Reading from the N-terminus, the 615-residue chain is Putative lipase ATG15 (615 aa).

At 1–22 (MKQLGEEHPLISTKRPRAKKRR) the chain is on the cytoplasmic side. A helical; Signal-anchor for type II membrane protein membrane pass occupies residues 23 to 43 (SIAICAAVLTLIAFGFIRFVP). The Lumenal segment spans residues 44–615 (KDILAGGWYE…NSAAHHVSSI (572 aa)). 3 N-linked (GlcNAc...) asparagine glycosylation sites follow: asparagine 253, asparagine 276, and asparagine 360. The active-site Charge relay system is the serine 378. Residues 520–559 (NKNDEPPLPNPLHPKPPSTVRSSNMPHEQSPNASRSLSSL) form a disordered region. The span at 525 to 536 (PPLPNPLHPKPP) shows a compositional bias: pro residues. A compositionally biased stretch (polar residues) spans 538–559 (TVRSSNMPHEQSPNASRSLSSL). Asparagine 551 carries an N-linked (GlcNAc...) asparagine glycan.

Belongs to the AB hydrolase superfamily. Lipase family. Binds to both phosphatidylinositol (PI) and phosphatidylinositol 3,5-bisphosphate (PIP2).

It localises to the endosome. The protein resides in the multivesicular body membrane. It is found in the prevacuolar compartment membrane. The enzyme catalyses a triacylglycerol + H2O = a diacylglycerol + a fatty acid + H(+). Its function is as follows. Lipase which is essential for lysis of subvacuolar cytoplasm to vacuole targeted bodies and intravacuolar autophagic bodies. Involved in the lysis of intravacuolar multivesicular body (MVB) vesicles. The intravacuolar membrane disintegration by ATG15 is critical to life span extension. This Debaryomyces hansenii (strain ATCC 36239 / CBS 767 / BCRC 21394 / JCM 1990 / NBRC 0083 / IGC 2968) (Yeast) protein is Putative lipase ATG15 (ATG15).